Here is a 315-residue protein sequence, read N- to C-terminus: MLDFEKPLFEIKNKIDALKESQEKNDVDLQEEIDMLEASLERETEKIYMHLKPWDRVQLARLQERPTTLDYISYIFDEFIELHGDRNYRDDPAMVGGIGYLNGQPVTVIGQQRGKDTKDNIYRNFGMAHPEGYRKALRLMKQAEKFGRPIFTFIDTKGAYPGKAAEERGQSESIAKNLIEMASLKVPVISLVIGEGGSGGALGIGIANRVLMLENSTYSVISPEGAAALLWKDSNLSKIAAETMKITAPDLKELQIIDDVINEPLGGAHKDVALQAERIKEAFTKQLSELEKLNGQELADDRFEKFRQIGEFKEQ.

The CoA carboxyltransferase C-terminal domain maps to 32–289 (EIDMLEASLE…KEAFTKQLSE (258 aa)).

This sequence belongs to the AccA family. In terms of assembly, acetyl-CoA carboxylase is a heterohexamer composed of biotin carboxyl carrier protein (AccB), biotin carboxylase (AccC) and two subunits each of ACCase subunit alpha (AccA) and ACCase subunit beta (AccD).

It localises to the cytoplasm. The catalysed reaction is N(6)-carboxybiotinyl-L-lysyl-[protein] + acetyl-CoA = N(6)-biotinyl-L-lysyl-[protein] + malonyl-CoA. It participates in lipid metabolism; malonyl-CoA biosynthesis; malonyl-CoA from acetyl-CoA: step 1/1. Its function is as follows. Component of the acetyl coenzyme A carboxylase (ACC) complex. First, biotin carboxylase catalyzes the carboxylation of biotin on its carrier protein (BCCP) and then the CO(2) group is transferred by the carboxyltransferase to acetyl-CoA to form malonyl-CoA. The sequence is that of Acetyl-coenzyme A carboxylase carboxyl transferase subunit alpha from Staphylococcus carnosus (strain TM300).